We begin with the raw amino-acid sequence, 186 residues long: Lipid A palmitoyltransferase PagP (186 aa).

A signal peptide spans 1–25 (MNVSKYVAIFFFVFIQLISVGKVFA). Catalysis depends on residues His58, Asp101, and Ser102.

Belongs to the lipid A palmitoyltransferase family. As to quaternary structure, homodimer.

The protein resides in the cell outer membrane. It carries out the reaction lipid A (E. coli) + a 1-hexadecanoyl-2-acyl-sn-glycero-3-phosphocholine = hepta-acyl lipid A (E. coli) + a 2-acyl-sn-glycero-3-phosphocholine. The catalysed reaction is lipid IIA + a 1-hexadecanoyl-2-acyl-sn-glycero-3-phosphocholine = lipid IIB + a 2-acyl-sn-glycero-3-phosphocholine. The enzyme catalyses lipid IVA (E. coli) + a 1-hexadecanoyl-2-acyl-sn-glycero-3-phosphocholine = lipid IVB (E. coli) + a 2-acyl-sn-glycero-3-phosphocholine. Functionally, transfers a palmitate residue from the sn-1 position of a phospholipid to the N-linked hydroxymyristate on the proximal unit of lipid A or its precursors. The sequence is that of Lipid A palmitoyltransferase PagP from Escherichia coli O6:H1 (strain CFT073 / ATCC 700928 / UPEC).